Here is a 46-residue protein sequence, read N- to C-terminus: Iota-conotoxin-like M11.1 (46 aa).

4 cysteine pairs are disulfide-bonded: C5–C19, C12–C22, C18–C27, and C21–C38. Residue M44 is modified to D-methionine. A propeptide (removed by a carboxypeptidase) is located at residue R46.

The protein belongs to the conotoxin I1 superfamily. As to expression, expressed by the venom duct.

Its subcellular location is the secreted. In terms of biological role, iota-conotoxins bind to voltage-gated sodium channels (Nav) and act as agonists by shifting the voltage-dependence of activation to more hyperpolarized levels. Produces general excitatory symptoms. The polypeptide is Iota-conotoxin-like M11.1 (Conus magus (Magical cone)).